We begin with the raw amino-acid sequence, 397 residues long: CCA-adding enzyme (397 aa).

Gly26 and Arg29 together coordinate ATP. The CTP site is built by Gly26 and Arg29. Mg(2+) contacts are provided by Asp39 and Asp41. 5 residues coordinate ATP: Arg110, Asp153, Arg156, Arg159, and Arg162. Residues Arg110, Asp153, Arg156, Arg159, and Arg162 each coordinate CTP.

This sequence belongs to the tRNA nucleotidyltransferase/poly(A) polymerase family. Bacterial CCA-adding enzyme type 3 subfamily. Homodimer. Mg(2+) is required as a cofactor.

It catalyses the reaction a tRNA precursor + 2 CTP + ATP = a tRNA with a 3' CCA end + 3 diphosphate. The catalysed reaction is a tRNA with a 3' CCA end + 2 CTP + ATP = a tRNA with a 3' CCACCA end + 3 diphosphate. Catalyzes the addition and repair of the essential 3'-terminal CCA sequence in tRNAs without using a nucleic acid template. Adds these three nucleotides in the order of C, C, and A to the tRNA nucleotide-73, using CTP and ATP as substrates and producing inorganic pyrophosphate. tRNA 3'-terminal CCA addition is required both for tRNA processing and repair. Also involved in tRNA surveillance by mediating tandem CCA addition to generate a CCACCA at the 3' terminus of unstable tRNAs. While stable tRNAs receive only 3'-terminal CCA, unstable tRNAs are marked with CCACCA and rapidly degraded. The polypeptide is CCA-adding enzyme (Bacillus cereus (strain G9842)).